The primary structure comprises 186 residues: Single-stranded DNA-binding protein 1 (186 aa).

An SSB domain is found at 1 to 108 (MDATVTVVGN…LEIDEIGPTL (108 aa)). Positions 119–186 (TQAGHGVSPD…EDFDSDEVPF (68 aa)) are disordered. Acidic residues predominate over residues 175 to 186 (SYEDFDSDEVPF).

In terms of assembly, homotetramer.

In Tropheryma whipplei (strain Twist) (Whipple's bacillus), this protein is Single-stranded DNA-binding protein 1 (ssb1).